We begin with the raw amino-acid sequence, 376 residues long: Geranylgeranyl transferase type-1 subunit beta (376 aa).

4 PFTB repeats span residues 128–179 (KRSL…YICG), 192–231 (TEKL…ALLS), 259–301 (MKFE…HLLT), and 310–353 (TELV…ALIE). Geranylgeranyl diphosphate contacts are provided by residues 216–218 (HSG) and 280–283 (RENK). The Zn(2+) site is built by Asp286 and Cys288. 289-292 (YAFW) contacts geranylgeranyl diphosphate. His341 is a binding site for Zn(2+).

The protein belongs to the protein prenyltransferase subunit beta family. As to quaternary structure, heterodimer of an alpha (RAM2) and a beta (CDC43) subunit. Requires Zn(2+) as cofactor. The cofactor is Mg(2+).

The protein localises to the cytoplasm. It catalyses the reaction geranylgeranyl diphosphate + L-cysteinyl-[protein] = S-geranylgeranyl-L-cysteinyl-[protein] + diphosphate. In terms of biological role, catalyzes the transfer of a geranyl-geranyl moiety from geranyl-geranyl diphosphate to proteins having the C-terminal sequence Cys-Ile-Ile-Leu or Cys-Val-Leu-Leu. Acts, among other substrates, on Rho1 and Rho2 and CDC42 proteins. Participates in a RAS-like C-terminal modification of proteins involved in nuclear division and bud growth. It is involved in bud positioning and cell polarity. The beta subunit is responsible for isoprenoid and peptide-binding. In Saccharomyces cerevisiae (strain ATCC 204508 / S288c) (Baker's yeast), this protein is Geranylgeranyl transferase type-1 subunit beta (CDC43).